A 478-amino-acid chain; its full sequence is Membrane-bound lytic murein transglycosylase F (478 aa).

A signal peptide spans 1 to 22 (MTRFLFAIILGLLLTACQQETV). Positions 23–257 (EETEFVPHKL…HLNEKYFGHV (235 aa)) are non-LT domain. The LT domain stretch occupies residues 258–478 (KRFDYIDTRA…PGTLSPDKPK (221 aa)). The active site involves glutamate 302. The segment at 447-478 (KQQNSEEVAPSDLTAEETPVPAPGTLSPDKPK) is disordered.

In the N-terminal section; belongs to the bacterial solute-binding protein 3 family. It in the C-terminal section; belongs to the transglycosylase Slt family.

The protein resides in the cell outer membrane. It carries out the reaction Exolytic cleavage of the (1-&gt;4)-beta-glycosidic linkage between N-acetylmuramic acid (MurNAc) and N-acetylglucosamine (GlcNAc) residues in peptidoglycan, from either the reducing or the non-reducing ends of the peptidoglycan chains, with concomitant formation of a 1,6-anhydrobond in the MurNAc residue.. Functionally, murein-degrading enzyme that degrades murein glycan strands and insoluble, high-molecular weight murein sacculi, with the concomitant formation of a 1,6-anhydromuramoyl product. Lytic transglycosylases (LTs) play an integral role in the metabolism of the peptidoglycan (PG) sacculus. Their lytic action creates space within the PG sacculus to allow for its expansion as well as for the insertion of various structures such as secretion systems and flagella. This Shewanella oneidensis (strain ATCC 700550 / JCM 31522 / CIP 106686 / LMG 19005 / NCIMB 14063 / MR-1) protein is Membrane-bound lytic murein transglycosylase F.